A 206-amino-acid chain; its full sequence is Guanylate kinase (206 aa).

One can recognise a Guanylate kinase-like domain in the interval G3–T183. A10–S17 is a binding site for ATP.

It belongs to the guanylate kinase family.

Its subcellular location is the cytoplasm. It carries out the reaction GMP + ATP = GDP + ADP. Functionally, essential for recycling GMP and indirectly, cGMP. This chain is Guanylate kinase, found in Haemophilus ducreyi (strain 35000HP / ATCC 700724).